A 191-amino-acid chain; its full sequence is Flagellar transcriptional regulator FlhC (191 aa).

Cys-139, Cys-142, Cys-159, and Cys-162 together coordinate Zn(2+).

This sequence belongs to the FlhC family. Heterohexamer composed of two FlhC and four FlhD subunits. Each FlhC binds a FlhD dimer, forming a heterotrimer, and a hexamer assembles by dimerization of two heterotrimers. The cofactor is Zn(2+).

It is found in the cytoplasm. Functionally, functions in complex with FlhD as a master transcriptional regulator that regulates transcription of several flagellar and non-flagellar operons by binding to their promoter region. Activates expression of class 2 flagellar genes, including fliA, which is a flagellum-specific sigma factor that turns on the class 3 genes. Also regulates genes whose products function in a variety of physiological pathways. The sequence is that of Flagellar transcriptional regulator FlhC from Enterobacter cloacae subsp. cloacae (strain ATCC 13047 / DSM 30054 / NBRC 13535 / NCTC 10005 / WDCM 00083 / NCDC 279-56).